The chain runs to 573 residues: Sulfite reductase [NADPH] hemoprotein beta-component (573 aa).

[4Fe-4S] cluster contacts are provided by C438, C444, C483, and C487. Residue C487 participates in siroheme binding.

The protein belongs to the nitrite and sulfite reductase 4Fe-4S domain family. In terms of assembly, alpha(8)-beta(8). The alpha component is a flavoprotein, the beta component is a hemoprotein. It depends on siroheme as a cofactor. Requires [4Fe-4S] cluster as cofactor.

It carries out the reaction hydrogen sulfide + 3 NADP(+) + 3 H2O = sulfite + 3 NADPH + 4 H(+). It functions in the pathway sulfur metabolism; hydrogen sulfide biosynthesis; hydrogen sulfide from sulfite (NADPH route): step 1/1. Its function is as follows. Component of the sulfite reductase complex that catalyzes the 6-electron reduction of sulfite to sulfide. This is one of several activities required for the biosynthesis of L-cysteine from sulfate. This Shouchella clausii (strain KSM-K16) (Alkalihalobacillus clausii) protein is Sulfite reductase [NADPH] hemoprotein beta-component.